Here is a 299-residue protein sequence, read N- to C-terminus: Acetylglutamate kinase (299 aa).

Substrate-binding positions include 72 to 73 (GG), Arg94, and Asn196.

Belongs to the acetylglutamate kinase family. ArgB subfamily.

It localises to the cytoplasm. The enzyme catalyses N-acetyl-L-glutamate + ATP = N-acetyl-L-glutamyl 5-phosphate + ADP. It functions in the pathway amino-acid biosynthesis; L-arginine biosynthesis; N(2)-acetyl-L-ornithine from L-glutamate: step 2/4. Catalyzes the ATP-dependent phosphorylation of N-acetyl-L-glutamate. The protein is Acetylglutamate kinase of Burkholderia mallei (strain NCTC 10247).